The primary structure comprises 299 residues: MAALTQKKTCSQMMEEWKEFMWNPRTREFMGRTGSSWALILLFYVVFYAFLTAVFSLSLWVMLQTIDEYTPKYADRLANPGLMIRPKMDTTEVVYSTNGMNGTWQAYVDNLNSLLKDYNKTVQMERGVNCTPGVYNMQEDTGDVRNNPKKACWFFRDVLGDCSGVSDTTYGYQDGKPCVLIKMNRVINFLPVPIKELSNTSITIKCTAQNNDDLLGSIQYFPSVNNQSLGAIDLMYFPYYGNRAQQNYTQPFVAVKFLNATKGVDHMVECRVNAANINNQDPRDLYQGRVIFTMKIDRL.

Residues 1–36 (MAALTQKKTCSQMMEEWKEFMWNPRTREFMGRTGSS) lie on the Cytoplasmic side of the membrane. Residues 37–57 (WALILLFYVVFYAFLTAVFSL) form a helical; Signal-anchor for type II membrane protein membrane-spanning segment. Topologically, residues 58-299 (SLWVMLQTID…VIFTMKIDRL (242 aa)) are extracellular. Asn-101 and Asn-119 each carry an N-linked (GlcNAc...) asparagine glycan. Intrachain disulfides connect Cys-130–Cys-152 and Cys-162–Cys-178. Asn-199, Asn-226, Asn-247, and Asn-259 each carry an N-linked (GlcNAc...) asparagine glycan. Cys-206 and Cys-270 are joined by a disulfide.

This sequence belongs to the X(+)/potassium ATPases subunit beta family. As to quaternary structure, the sodium/potassium-transporting ATPase is composed of a catalytic alpha subunit, an auxiliary non-catalytic beta subunit and an additional regulatory subunit. As to expression, expressed at a high level in bladder epithelial cells and eye and at a trace level in kidney; it is not detectable in significant amounts in the stomach, colon and small intestine.

It is found in the cell membrane. In terms of biological role, this is the non-catalytic component of the active enzyme, which catalyzes the hydrolysis of ATP coupled with the exchange of Na(+) and K(+) ions across the plasma membrane. The exact function of this glycoprotein is not known. Some specific sequence of the beta subunit can modulate the activation of the Na,K-pump by extracellular potassium ions. The sequence is that of Sodium/potassium-transporting ATPase subunit beta-2 from Rhinella marina (Cane toad).